The chain runs to 365 residues: Chorismate synthase (365 aa).

The segment covering 41 to 51 (IQKELDRRRPG) has biased composition (basic and acidic residues). The disordered stretch occupies residues 41 to 62 (IQKELDRRRPGQSEVSTPRSEA). An NADP(+)-binding site is contributed by R48. FMN-binding positions include 125–127 (RSS), G285, 300–304 (KPTPS), and R327.

The protein belongs to the chorismate synthase family. It depends on FMNH2 as a cofactor.

It catalyses the reaction 5-O-(1-carboxyvinyl)-3-phosphoshikimate = chorismate + phosphate. It participates in metabolic intermediate biosynthesis; chorismate biosynthesis; chorismate from D-erythrose 4-phosphate and phosphoenolpyruvate: step 7/7. Its function is as follows. Catalyzes the anti-1,4-elimination of the C-3 phosphate and the C-6 proR hydrogen from 5-enolpyruvylshikimate-3-phosphate (EPSP) to yield chorismate, which is the branch point compound that serves as the starting substrate for the three terminal pathways of aromatic amino acid biosynthesis. This reaction introduces a second double bond into the aromatic ring system. The protein is Chorismate synthase of Methanosarcina mazei (strain ATCC BAA-159 / DSM 3647 / Goe1 / Go1 / JCM 11833 / OCM 88) (Methanosarcina frisia).